An 843-amino-acid polypeptide reads, in one-letter code: MTETKSGKAVAPAAQDSVAGTLAVCRSSGEEFRVPKTHDMLRSLFDPRLRKSFLELCITLSLVANCAFCYWSWRVMGGEWAMRMYLAQYLAWRLTYNLGIGLILHYQSHYEFLTEFAKRNGLFASGAASKSWLASFCQFEIASKMPREYDMAQYPTEFNVWLLFRQFVDLVLMQDFTTYVLYVLLSFSKSQVTWSLLQHLNWTSCRVYVGTLMLLLNVWVKMDAHRVVKDYAWYWGDFFFLLKDSNLIFDGVFNISPHPMYSIGYMGYYGVSLITGDYRVLLVSILGHFLQFLFLKYVETPHIERIYGPDQPSSIERVDDQIIKNNRNYTRPLMMTYFWFKNFDPLRPTDYFTVGTAAASISAILLNPKKETVFAITLFVKLVTSMVNFFILRRQSTDKWFTKLFLRNGYTQLYSYQMWQFIYNFNLMLSYVTLALQTWIQFQALSQHDYTNVIFGFILVALHIWADGEILNALTEFGWFYGDFFLTNYIQRPKLASHGIYRYLKNPECVLGVAGAWGTVLITDFSVENIILATIWTLSNHIMVTFVESPHVAKVYGNEMLARQSGVGKTLLGFTPIKHFSDWLDKFSGSLIDMLNVSTEGRDQLEDVIAAALQATTRKLSPDSEFEINRDSENNSDGDFSFTIGDSIEISWKLPRELYHDEDWIGLYRVLETGEDRYRTLVSSRDHWCATNTMGYPKSVKAIGAVKEFTKGDTCVQGRVVFDHNLLYFEKGVYEFRYHSTSGHKVLMISPPFKITVPQLDLDTPEALYQSTVKLLEKCHCLNENGRFEHSKNKYLSERTLQKLFRNSTGADISSDYMKRVNYEIREITERIYEMKKILDSLR.

At 1–52 the chain is on the lumenal side; it reads MTETKSGKAVAPAAQDSVAGTLAVCRSSGEEFRVPKTHDMLRSLFDPRLRKS. Residues 53 to 73 form a helical membrane-spanning segment; that stretch reads FLELCITLSLVANCAFCYWSW. Residues 74–83 lie on the Cytoplasmic side of the membrane; sequence RVMGGEWAMR. A helical membrane pass occupies residues 84 to 104; the sequence is MYLAQYLAWRLTYNLGIGLIL. The Lumenal portion of the chain corresponds to 105 to 166; the sequence is HYQSHYEFLT…EFNVWLLFRQ (62 aa). Residues 167 to 187 form a helical membrane-spanning segment; that stretch reads FVDLVLMQDFTTYVLYVLLSF. The Cytoplasmic portion of the chain corresponds to 188-197; sequence SKSQVTWSLL. A helical transmembrane segment spans residues 198 to 220; that stretch reads QHLNWTSCRVYVGTLMLLLNVWV. Residues 221–246 are Lumenal-facing; sequence KMDAHRVVKDYAWYWGDFFFLLKDSN. A helical transmembrane segment spans residues 247–267; the sequence is LIFDGVFNISPHPMYSIGYMG. The Cytoplasmic segment spans residues 268–279; that stretch reads YYGVSLITGDYR. The chain crosses the membrane as a helical span at residues 280-300; sequence VLLVSILGHFLQFLFLKYVET. The Lumenal segment spans residues 301–348; the sequence is PHIERIYGPDQPSSIERVDDQIIKNNRNYTRPLMMTYFWFKNFDPLRP. The helical transmembrane segment at 349–366 threads the bilayer; it reads TDYFTVGTAAASISAILL. The Cytoplasmic segment spans residues 367–371; the sequence is NPKKE. The helical transmembrane segment at 372–392 threads the bilayer; it reads TVFAITLFVKLVTSMVNFFIL. Residues 393–419 lie on the Lumenal side of the membrane; sequence RRQSTDKWFTKLFLRNGYTQLYSYQMW. The chain crosses the membrane as a helical span at residues 420–440; sequence QFIYNFNLMLSYVTLALQTWI. The Cytoplasmic segment spans residues 441 to 452; the sequence is QFQALSQHDYTN. A helical membrane pass occupies residues 453–473; that stretch reads VIFGFILVALHIWADGEILNA. Topologically, residues 474 to 512 are lumenal; the sequence is LTEFGWFYGDFFLTNYIQRPKLASHGIYRYLKNPECVLG. Residues 513–533 traverse the membrane as a helical segment; the sequence is VAGAWGTVLITDFSVENIILA. Over 534–843 the chain is Cytoplasmic; it reads TIWTLSNHIM…EMKKILDSLR (310 aa).

It belongs to the class VI-like SAM-binding methyltransferase superfamily. CHO2 family.

It localises to the endoplasmic reticulum membrane. It catalyses the reaction a 1,2-diacyl-sn-glycero-3-phosphoethanolamine + S-adenosyl-L-methionine = a 1,2-diacyl-sn-glycero-3-phospho-N-methylethanolamine + S-adenosyl-L-homocysteine + H(+). It participates in phospholipid metabolism; phosphatidylcholine biosynthesis. Catalyzes the first step of the methylation pathway of phosphatidylcholine biosynthesis, the SAM-dependent methylation of phosphatidylethanolamine (PE) to phosphatidylmonomethylethanolamine (PMME). The protein is Phosphatidylethanolamine N-methyltransferase (CHO2) of Eremothecium gossypii (strain ATCC 10895 / CBS 109.51 / FGSC 9923 / NRRL Y-1056) (Yeast).